The chain runs to 429 residues: Glutamate-1-semialdehyde 2,1-aminomutase 2 (429 aa).

Position 268 is an N6-(pyridoxal phosphate)lysine (lysine 268).

This sequence belongs to the class-III pyridoxal-phosphate-dependent aminotransferase family. HemL subfamily. Homodimer. The cofactor is pyridoxal 5'-phosphate.

Its subcellular location is the cytoplasm. The enzyme catalyses (S)-4-amino-5-oxopentanoate = 5-aminolevulinate. It functions in the pathway porphyrin-containing compound metabolism; protoporphyrin-IX biosynthesis; 5-aminolevulinate from L-glutamyl-tRNA(Glu): step 2/2. The protein is Glutamate-1-semialdehyde 2,1-aminomutase 2 of Listeria monocytogenes serotype 4a (strain HCC23).